A 512-amino-acid polypeptide reads, in one-letter code: MKNIKDEWVQIALDLTSGLSSKDRFERLLSTIRNALKCDASALLLFKNQYFSPLATNGLDGDVIGRRFAISQHPRLEAIARAGDIVRFPSDSDLPDPYDGLIANEERQLQVHSCIGLPLLVNERLIGAVTIDAFDPTQFDSFTNKELRIISALAATSLHTALLMERLENQSGENSNNSSFERSPDNHVEMIGESLAMQELQANINAVANTELSVLITGETGVGKELVASALHQRSTRAQQNLVYLNCAALPESVAESELFGHVKGAFTGAISNRKGKFESADNGTLFLDEIGELSLALQAKLLRVLQYGDIQRIGDDNHIKVNTRIIAATNKTLSDEVKNGDFRADLYHRLSVFPIFVPPLRDRGNDVTLLVGYFAEKSRIKLAATSIRITPEAITLLNDYSWPGNIRELEHVISRAAVLSRAQSDDSDLVLSPTHFLIKKENHAEKNIANQIVTPHSKNTKDLRSATDEFQANLIKKTYQEQQQNWAATARALQLDTGNLHRLAKRLNLKE.

The region spanning 190–419 is the Sigma-54 factor interaction domain; sequence MIGESLAMQE…LEHVISRAAV (230 aa). Residues 218–225 and 281–290 each bind ATP; these read GETGVGKE and ADNGTLFLDE. The H-T-H motif DNA-binding region spans 487–506; that stretch reads WAATARALQLDTGNLHRLAK.

Its pathway is nitrogen metabolism; nitric oxide reduction. Functionally, required for the expression of anaerobic nitric oxide (NO) reductase, acts as a transcriptional activator for at least the norVW operon. Activation also requires sigma-54. The sequence is that of Anaerobic nitric oxide reductase transcription regulator NorR from Aliivibrio fischeri (strain ATCC 700601 / ES114) (Vibrio fischeri).